A 307-amino-acid chain; its full sequence is Small ribosomal subunit protein uS5m (307 aa).

The N-terminal 13 residues, 1-13 (MFKRQLSTSVRYL), are a transit peptide targeting the mitochondrion. The S5 DRBM domain occupies 144 to 208 (LTMKPLVMKR…WDAVRNLKEI (65 aa)).

Belongs to the universal ribosomal protein uS5 family. Component of the mitochondrial small ribosomal subunit (mt-SSU). Mature yeast 74S mitochondrial ribosomes consist of a small (37S) and a large (54S) subunit. The 37S small subunit contains a 15S ribosomal RNA (15S mt-rRNA) and 34 different proteins. The 54S large subunit contains a 21S rRNA (21S mt-rRNA) and 46 different proteins. uS3m, uS4m and uS5m form the narrow entry site of the mRNA channel.

It localises to the mitochondrion. Functionally, component of the mitochondrial ribosome (mitoribosome), a dedicated translation machinery responsible for the synthesis of mitochondrial genome-encoded proteins, including at least some of the essential transmembrane subunits of the mitochondrial respiratory chain. The mitoribosomes are attached to the mitochondrial inner membrane and translation products are cotranslationally integrated into the membrane. The chain is Small ribosomal subunit protein uS5m (MRPS5) from Saccharomyces cerevisiae (strain ATCC 204508 / S288c) (Baker's yeast).